Reading from the N-terminus, the 218-residue chain is Ras-related protein Rab-11B (218 aa).

G2 is modified (N-acetylglycine). R4 bears the Citrulline mark. GTP is bound by residues S20, G21, G23, K24, S25, N26, N37, L38, S40, S42, and T43. S25 is a binding site for Mg(2+). A Switch 1 motif is present at residues 36–47 (FNLESKSTIGVE). Mg(2+) is bound by residues T43 and D66. A Switch 2 motif is present at residues 67 to 86 (TAGQERYRAITSAYYRGAVG). Residues G69, N124, K125, D127, A155, and L156 each contribute to the GTP site. Residues 184 to 218 (RAAHDESPGNNVVDISVPPTTDGQRPNKLQCCQSL) are disordered. Residues C214 and C215 are each lipidated (S-geranylgeranyl cysteine). At C215 the chain carries Cysteine methyl ester. Positions 216 to 218 (QSL) are cleaved as a propeptide — removed in mature form.

Belongs to the small GTPase superfamily. Rab family. In terms of assembly, interacts with KCNMA1. Interacts with RAB11FIP1, RAB11FIP2, RAB11FIP3 and RAB11FIP4. May interact with TBC1D14. Interacts with ATP6V1E1. Interacts with PI4KB. Interacts (GDP-bound form) with ZFYVE27. Interacts (GDP-bound form) with KIF5A in a ZFYVE27-dependent manner. Interacts with RELCH. Interacts (in GTP-bound form) with TBC1D8B (via domain Rab-GAP TBC). Forms a complex containing RAB11B, ASAP1, Rabin8/RAB3IP, RAP11FIP3 and ARF4. Interacts with WDR44. Requires Mg(2+) as cofactor. Citrullinated by PADI4. Abundantly expressed in brain, heart and testis. Also detected in kidney and pancreatic islets.

Its subcellular location is the recycling endosome membrane. The protein localises to the cytoplasmic vesicle. It localises to the secretory vesicle. It is found in the synaptic vesicle membrane. The protein resides in the phagosome membrane. It catalyses the reaction GTP + H2O = GDP + phosphate + H(+). With respect to regulation, regulated by guanine nucleotide exchange factors (GEFs) which promote the exchange of bound GDP for free GTP. Regulated by GTPase activating proteins (GAPs) which increase the GTP hydrolysis activity. Inhibited by GDP dissociation inhibitors (GDIs) which prevent Rab-GDP dissociation. Functionally, the small GTPases Rab are key regulators of intracellular membrane trafficking, from the formation of transport vesicles to their fusion with membranes. Rabs cycle between an inactive GDP-bound form and an active GTP-bound form that is able to recruit to membranes different set of downstream effectors directly responsible for vesicle formation, movement, tethering and fusion. The small Rab GTPase RAB11B plays a role in endocytic recycling, regulating apical recycling of several transmembrane proteins including cystic fibrosis transmembrane conductance regulator/CFTR, epithelial sodium channel/ENaC, potassium voltage-gated channel, and voltage-dependent L-type calcium channel. May also regulate constitutive and regulated secretion, like insulin granule exocytosis. Required for melanosome transport and release from melanocytes. Also regulates V-ATPase intracellular transport in response to extracellular acidosis. Promotes Rabin8/RAB3IP preciliary vesicular trafficking to mother centriole by forming a ciliary targeting complex containing Rab11, ASAP1, Rabin8/RAB3IP, RAB11FIP3 and ARF4, thereby regulating ciliogenesis initiation. On the contrary, upon LPAR1 receptor signaling pathway activation, interaction with phosphorylated WDR44 prevents Rab11-RAB3IP-RAB11FIP3 complex formation and cilia growth. In Mus musculus (Mouse), this protein is Ras-related protein Rab-11B.